The following is a 663-amino-acid chain: Protein associated with UVRAG as autophagy enhancer (663 aa).

Disordered regions lie at residues methionine 1–glutamate 36 and aspartate 65–alanine 136. Polar residues-rich tracts occupy residues threonine 80–leucine 93 and proline 105–threonine 130. Positions glutamate 196 to glutamate 235 are interaction with UVRAG. An N6-acetyllysine mark is found at lysine 484, lysine 534, lysine 574, and lysine 634.

As to quaternary structure, interacts with UVRAG; the interaction is direct and promotes association with the PI3K/PI3KC3 and HOPS complexes. Interacts with STX17. Acetylated by KAT5/TIP60 under autophagy induction, promoting autophagosome maturation and lipid metabolism. Lys-484 and Lys-574 constitute the key sites for tuning function in autophagy.

The protein localises to the cytoplasmic vesicle. Its subcellular location is the autophagosome membrane. In terms of biological role, regulator of autophagy that promotes autophagosome maturation by facilitating the biogenesis of phosphatidylinositol 3-phosphate (PtdIns(3)P) in late steps of autophagy. Acts by antagonizing RUBCN, thereby stimulating phosphatidylinositol 3-kinase activity of the PI3K/PI3KC3 complex. Following anchorage to the autophagosomal SNARE STX17, promotes the recruitment of PI3K/PI3KC3 and HOPS complexes to the autophagosome to regulate the fusion specificity of autophagosomes with late endosomes/lysosomes. Binds phosphoinositides phosphatidylinositol 3-phosphate (PtdIns(3)P), 4-phosphate (PtdIns(4)P) and 5-phosphate (PtdIns(5)P). In addition to its role in autophagy, acts as a regulator of lipid and glycogen homeostasis. May act as a tumor suppressor. The protein is Protein associated with UVRAG as autophagy enhancer of Bos taurus (Bovine).